We begin with the raw amino-acid sequence, 349 residues long: MKDIGIVGYGSYIPKYRIKVEEIAKVWGKDPEAIKKGLVVNEKSVPSPDEDTATIAVEAARNAVKRAGINAEKIGAVYVGSESHPYAVKPTSATVAEAIGATPDLTAADLEFACKAGTAGIQMCMGLVGSGLIEYGMAIGADTAQGAPGDALEYTASAGGAAYIIGNKKDEMIAVFNGTYSYTTDTPDFWRREGQSYPKHGGRFTGEPAYFKHVLNAAKGIMEKMGTTVKDYDYCVFHQPNGKFYIKAAKSLGFTNEQYKYGLLTPYLGNTYSGAVPLGLSNILDHAEEGARILAVSYGSGAGSDAFDITVTERIKEVVDKAPKTLDLLNRKKYIDYAVYVKYRGKIKI.

Position 30 (Asp30) interacts with (3S)-3-hydroxy-3-methylglutaryl-CoA. Catalysis depends on Glu82, which acts as the Proton donor/acceptor. Cys114 contacts (3S)-3-hydroxy-3-methylglutaryl-CoA. Cys114 (acyl-thioester intermediate) is an active-site residue. CoA is bound at residue Arg203. Positions 205 and 238 each coordinate (3S)-3-hydroxy-3-methylglutaryl-CoA. His238 acts as the Proton donor/acceptor in catalysis. A CoA-binding site is contributed by Lys243. Residues Lys247, Asn270, and Ser300 each coordinate (3S)-3-hydroxy-3-methylglutaryl-CoA.

Belongs to the thiolase-like superfamily. Archaeal HMG-CoA synthase family. As to quaternary structure, interacts with acetoacetyl-CoA thiolase that catalyzes the precedent step in the pathway and with a DUF35 protein. The acetoacetyl-CoA thiolase/HMG-CoA synthase complex channels the intermediate via a fused CoA-binding site, which allows for efficient coupling of the endergonic thiolase reaction with the exergonic HMGCS reaction.

It carries out the reaction acetoacetyl-CoA + acetyl-CoA + H2O = (3S)-3-hydroxy-3-methylglutaryl-CoA + CoA + H(+). Its pathway is metabolic intermediate biosynthesis; (R)-mevalonate biosynthesis; (R)-mevalonate from acetyl-CoA: step 2/3. In terms of biological role, catalyzes the condensation of acetyl-CoA with acetoacetyl-CoA to form 3-hydroxy-3-methylglutaryl-CoA (HMG-CoA). Functions in the mevalonate (MVA) pathway leading to isopentenyl diphosphate (IPP), a key precursor for the biosynthesis of isoprenoid compounds that are building blocks of archaeal membrane lipids. This is Hydroxymethylglutaryl-CoA synthase from Methanothermococcus thermolithotrophicus (Methanococcus thermolithotrophicus).